The primary structure comprises 777 residues: ATPase ARSA1 (777 aa).

110–117 (KGGVGKTS) contributes to the ATP binding site. Asp139 is an active-site residue. Residues Asn372 and 454–461 (KGGVGKTS) each bind ATP. Asp483 is a catalytic residue. Asn712 provides a ligand contact to ATP.

Belongs to the arsA ATPase family. In terms of assembly, monomer. Interacts with TOC34.

The protein resides in the cytoplasm. It localises to the cytosol. In terms of biological role, ATPase required for the post-translational delivery of tail-anchored (TA) proteins to the chloroplast. Required for the accumulation of TOC34, an essential component of the outer chloroplast membrane translocon (TOC) complex. Recognizes and selectively binds the transmembrane domain of TA proteins in the cytosol. This complex then targets to chloroplast, where the tail-anchored protein is released for insertion. This process is regulated by ATP binding and hydrolysis. In Chlamydomonas reinhardtii (Chlamydomonas smithii), this protein is ATPase ARSA1.